Reading from the N-terminus, the 500-residue chain is Cytochrome P450 2D28 (500 aa).

A heme-binding site is contributed by cysteine 446.

Belongs to the cytochrome P450 family. Heme serves as cofactor.

Its subcellular location is the endoplasmic reticulum membrane. It is found in the microsome membrane. The polypeptide is Cytochrome P450 2D28 (CYP2D28A) (Mesocricetus auratus (Golden hamster)).